The chain runs to 315 residues: Transaldolase (315 aa).

K131 functions as the Schiff-base intermediate with substrate in the catalytic mechanism.

The protein belongs to the transaldolase family. Type 1 subfamily. As to quaternary structure, homodimer.

It localises to the cytoplasm. The catalysed reaction is D-sedoheptulose 7-phosphate + D-glyceraldehyde 3-phosphate = D-erythrose 4-phosphate + beta-D-fructose 6-phosphate. It participates in carbohydrate degradation; pentose phosphate pathway; D-glyceraldehyde 3-phosphate and beta-D-fructose 6-phosphate from D-ribose 5-phosphate and D-xylulose 5-phosphate (non-oxidative stage): step 2/3. Functionally, transaldolase is important for the balance of metabolites in the pentose-phosphate pathway. The polypeptide is Transaldolase (Actinobacillus pleuropneumoniae serotype 7 (strain AP76)).